Reading from the N-terminus, the 376-residue chain is MGGGDLNMKKSWHPLLMRNQEKVWKDEQAHKEEMKRVEQLRREIEEERQLLELHRLQEAAGGKKRKDRVEWMYAVPNTNGPNRDSSEMEEYLLGRRRLDDLLKDKIEDQNNSLEKTEFIALQNANSLQDTQAKLRLDPLLAIKQQEQKQLQTLMEKRKYSLDSDRKSKERRHRDRHHRSNQDRSRERSDNEQHSSDKREHSRRSYRNDRNNWRERTHNDRYRHRDKYDSGYFKKHYDDDMRFDQGHFQDERDLKKYVRTSRQYSRSPSPDFRTRNHQFHSRDSQPITQRHTDIESRLQKMQDNAKELDESRRKKIELLEKKERDEEQFLEKERRDTARKWDNQGDFIRNMRKEIYSGDSVSLADRVNSSRHNMLRP.

Residues 25–60 (KDEQAHKEEMKRVEQLRREIEEERQLLELHRLQEAA) adopt a coiled-coil conformation. 2 disordered regions span residues 153 to 211 (LMEK…DRNN) and 258 to 289 (RTSRQYSRSPSPDFRTRNHQFHSRDSQPITQR). The span at 154-167 (MEKRKYSLDSDRKS) shows a compositional bias: basic and acidic residues. Basic residues predominate over residues 168–178 (KERRHRDRHHR). Basic and acidic residues predominate over residues 179–199 (SNQDRSRERSDNEQHSSDKRE). Residues Ser-266 and Ser-268 each carry the phosphoserine modification. Residues 286 to 334 (ITQRHTDIESRLQKMQDNAKELDESRRKKIELLEKKERDEEQFLEKERR) are a coiled coil.

Belongs to the CWC25 family. In terms of assembly, belongs to the 40S cdc5-associated complex (or cwf complex), a spliceosome sub-complex reminiscent of a late-stage spliceosome composed of the U2, U5 and U6 snRNAs and at least brr2, cdc5, cwf2/prp3, cwf3/syf1, cwf4/syf3, cwf5/ecm2, spp42/cwf6, cwf7/spf27, cwf8, cwf9, cwf10, cwf11, cwf12, prp45/cwf13, cwf14, cwf15, cwf16, cwf17, cwf18, cwf19, cwf20, cwf21, cwf22, cwf23, cwf24, cwf25, cwf26, cyp7/cwf27, cwf28, cwf29/ist3, lea1, msl1, prp5/cwf1, prp10, prp12/sap130, prp17, prp22, sap61, sap62, sap114, sap145, slu7, smb1, smd1, smd3, smf1, smg1 and syf2.

The protein localises to the nucleus. Functionally, involved in mRNA splicing. The sequence is that of Pre-mRNA-splicing factor cwf25 (cwf25) from Schizosaccharomyces pombe (strain 972 / ATCC 24843) (Fission yeast).